Reading from the N-terminus, the 81-residue chain is uncharacterized protein (81 aa).

2 consecutive transmembrane segments (helical) span residues 4–24 (IFKM…FNYT) and 61–81 (NIYT…LHII).

Its subcellular location is the cell membrane. This is an uncharacterized protein from Bacillus subtilis (strain 168).